Here is a 103-residue protein sequence, read N- to C-terminus: Large ribosomal subunit protein uL24 (103 aa).

The protein belongs to the universal ribosomal protein uL24 family. Part of the 50S ribosomal subunit.

One of two assembly initiator proteins, it binds directly to the 5'-end of the 23S rRNA, where it nucleates assembly of the 50S subunit. Functionally, one of the proteins that surrounds the polypeptide exit tunnel on the outside of the subunit. The polypeptide is Large ribosomal subunit protein uL24 (Ruthia magnifica subsp. Calyptogena magnifica).